The primary structure comprises 152 residues: Regulatory protein RecX (152 aa).

It belongs to the RecX family.

It localises to the cytoplasm. Functionally, modulates RecA activity. The sequence is that of Regulatory protein RecX from Haemophilus influenzae (strain PittEE).